A 64-amino-acid polypeptide reads, in one-letter code: Large ribosomal subunit protein bL28 (64 aa).

It belongs to the bacterial ribosomal protein bL28 family.

The sequence is that of Large ribosomal subunit protein bL28 from Syntrophobacter fumaroxidans (strain DSM 10017 / MPOB).